The sequence spans 1628 residues: Lysine-specific histone demethylase 1 homolog 3 (1628 aa).

Residues 1–71 are disordered; it reads MDGKEKKSGS…KKLSALGKDS (71 aa). Positions 19-28 are enriched in acidic residues; it reads FDDDADDDEP. Residues 43–64 are compositionally biased toward basic and acidic residues; that stretch reads KDKVETESTGKQRQKQVVEKKL. In terms of domain architecture, SWIRM spans 378 to 478; the sequence is GRAAAVTAGL…AGISSVNGKA (101 aa). Glu-647, Arg-649, Arg-655, and Glu-1077 together coordinate FAD. The segment at 1271 to 1317 is disordered; sequence SGKKSLRQANTTNTSRIRRKLNSPDTDSKGKLSNGNDVKTDEEFEDN.

It belongs to the flavin monoamine oxidase family. Requires FAD as cofactor.

Its function is as follows. Probable histone demethylase that reduces the levels of histone H3 'Lys-4' methylation in chromatin. This Arabidopsis thaliana (Mouse-ear cress) protein is Lysine-specific histone demethylase 1 homolog 3 (LDL3).